The chain runs to 363 residues: Ferrochelatase (363 aa).

Residues His209 and Glu290 each coordinate Fe cation.

The protein belongs to the ferrochelatase family.

The protein localises to the cytoplasm. The catalysed reaction is heme b + 2 H(+) = protoporphyrin IX + Fe(2+). It functions in the pathway porphyrin-containing compound metabolism; protoheme biosynthesis; protoheme from protoporphyrin-IX: step 1/1. In terms of biological role, catalyzes the ferrous insertion into protoporphyrin IX. The polypeptide is Ferrochelatase (Methylibium petroleiphilum (strain ATCC BAA-1232 / LMG 22953 / PM1)).